A 315-amino-acid polypeptide reads, in one-letter code: Acetaldehyde dehydrogenase 1 (315 aa).

12 to 15 (SGNI) provides a ligand contact to NAD(+). Residue cysteine 132 is the Acyl-thioester intermediate of the active site. NAD(+)-binding positions include 163-171 (SAGPGTRAN) and asparagine 291.

Belongs to the acetaldehyde dehydrogenase family.

The catalysed reaction is acetaldehyde + NAD(+) + CoA = acetyl-CoA + NADH + H(+). This is Acetaldehyde dehydrogenase 1 from Paraburkholderia phymatum (strain DSM 17167 / CIP 108236 / LMG 21445 / STM815) (Burkholderia phymatum).